An 861-amino-acid chain; its full sequence is Rod cGMP-specific 3',5'-cyclic phosphodiesterase subunit alpha (861 aa).

Residue Gly2 is modified to N-acetylglycine. 2 consecutive GAF domains span residues 73–222 and 254–431; these read QAER…NLIM and DIER…GWSV. In terms of domain architecture, PDEase spans 483–816; the sequence is EEEELAEILQ…KEWKALADEY (334 aa). His559 functions as the Proton donor in the catalytic mechanism. Residues His563, His599, Asp600, and Asp720 each coordinate a divalent metal cation. The segment at 821 to 861 is disordered; the sequence is KALEEEKQKQQTAKQGAAGDQPGGNPSPAGGAPASKSCCIQ. Over residues 830 to 861 the composition is skewed to low complexity; it reads QQTAKQGAAGDQPGGNPSPAGGAPASKSCCIQ. A Cysteine methyl ester modification is found at Cys858. The S-farnesyl cysteine moiety is linked to residue Cys858. The propeptide at 859–861 is removed in mature form; it reads CIQ.

It belongs to the cyclic nucleotide phosphodiesterase family. In terms of assembly, oligomer composed of two catalytic chains (alpha and beta), an inhibitory chain (gamma) and the delta chain. It depends on a divalent metal cation as a cofactor.

It is found in the cell membrane. It localises to the cell projection. The protein localises to the cilium. Its subcellular location is the photoreceptor outer segment. It catalyses the reaction 3',5'-cyclic GMP + H2O = GMP + H(+). Its function is as follows. Rod-specific cGMP phosphodiesterase that catalyzes the hydrolysis of 3',5'-cyclic GMP. This protein participates in processes of transmission and amplification of the visual signal. This Canis lupus familiaris (Dog) protein is Rod cGMP-specific 3',5'-cyclic phosphodiesterase subunit alpha.